Here is a 613-residue protein sequence, read N- to C-terminus: 8-methylmenaquinol:fumarate reductase flavoprotein subunit (613 aa).

Positions 1 to 33 form a signal peptide, tat-type signal; sequence MSEQFTRREFLQSACITMGALAVSTSGVDRAFA. FAD contacts are provided by residues 53 to 58, 78 to 93, and Asp255; these read GSGAAG and SKVMPTRSATTMAEGG. Substrate is bound by residues His276 and Thr288. Residue Arg319 is the Proton acceptor of the active site. His387 lines the substrate pocket. Glu413 is a binding site for FAD. Residue Arg424 coordinates substrate. An FAD-binding site is contributed by 429 to 430; that stretch reads SL.

Belongs to the FAD-dependent oxidoreductase 2 family. FRD/SDH subfamily. In terms of assembly, the MFR complex is composed of three subunits: a flavoprotein (SdhA), an iron-sulfur protein (SdhB), and one hydrophobic anchor protein (SdhE). The cofactor is FAD. Predicted to be exported by the Tat system. The position of the signal peptide cleavage has not been experimentally proven.

The protein resides in the periplasm. Its subcellular location is the cell membrane. The enzyme catalyses 8-methylmenaquinone-6 + succinate = 8-methylmenaquinol-6 + fumarate. In terms of biological role, flavoprotein subunit of 8-methylmenaquinol:fumarate reductase (MFR), that catalyzes the reduction of fumarate using 8-methylmenaquinol-6 as electron donor. The complex shows no succinate oxidation activity. Is involved in anaerobic metabolism. SdhA contains the dicarboxylate reduction site. This chain is 8-methylmenaquinol:fumarate reductase flavoprotein subunit, found in Wolinella succinogenes (strain ATCC 29543 / DSM 1740 / CCUG 13145 / JCM 31913 / LMG 7466 / NCTC 11488 / FDC 602W) (Vibrio succinogenes).